The sequence spans 403 residues: Metacaspase-1 (403 aa).

Residues 1–95 (MFPGSGHNTY…PSGSQSFGQN (95 aa)) form a disordered region. Pro residues predominate over residues 13-22 (YPPPQGPPPN). Low complexity-rich tracts occupy residues 23-34 (NNGYNSGPNNSY) and 49-62 (QYDQQSQYSQQSQP). Residues His-193 and Cys-249 contribute to the active site.

It belongs to the peptidase C14B family.

Involved in cell death (apoptosis). The protein is Metacaspase-1 (MCA1) of Scheffersomyces stipitis (strain ATCC 58785 / CBS 6054 / NBRC 10063 / NRRL Y-11545) (Yeast).